A 545-amino-acid polypeptide reads, in one-letter code: Chaperonin GroEL (545 aa).

ATP-binding positions include Thr30–Pro33, Lys51, Asp87–Thr91, Gly415, and Asp496.

This sequence belongs to the chaperonin (HSP60) family. In terms of assembly, forms a cylinder of 14 subunits composed of two heptameric rings stacked back-to-back. Interacts with the co-chaperonin GroES.

The protein resides in the cytoplasm. It carries out the reaction ATP + H2O + a folded polypeptide = ADP + phosphate + an unfolded polypeptide.. Together with its co-chaperonin GroES, plays an essential role in assisting protein folding. The GroEL-GroES system forms a nano-cage that allows encapsulation of the non-native substrate proteins and provides a physical environment optimized to promote and accelerate protein folding. The chain is Chaperonin GroEL from Rhodobacter capsulatus (Rhodopseudomonas capsulata).